Reading from the N-terminus, the 332-residue chain is o-succinylbenzoate synthase (332 aa).

Lys135 acts as the Proton donor in catalysis. 3 residues coordinate Mg(2+): Asp163, Glu192, and Asp215. The Proton acceptor role is filled by Lys241.

Belongs to the mandelate racemase/muconate lactonizing enzyme family. MenC type 1 subfamily. The cofactor is a divalent metal cation.

It carries out the reaction (1R,6R)-6-hydroxy-2-succinyl-cyclohexa-2,4-diene-1-carboxylate = 2-succinylbenzoate + H2O. The protein operates within quinol/quinone metabolism; 1,4-dihydroxy-2-naphthoate biosynthesis; 1,4-dihydroxy-2-naphthoate from chorismate: step 4/7. Its pathway is quinol/quinone metabolism; menaquinone biosynthesis. Functionally, converts 2-succinyl-6-hydroxy-2,4-cyclohexadiene-1-carboxylate (SHCHC) to 2-succinylbenzoate (OSB). The protein is o-succinylbenzoate synthase of Vibrio cholerae serotype O1 (strain ATCC 39315 / El Tor Inaba N16961).